The chain runs to 423 residues: Torsin-4A (423 aa).

The segment at 47–68 is disordered; the sequence is PGGGPDVGTGAPRPGCSPRAPR. A phosphoserine mark is found at Ser63 and Ser81. Residue Thr89 is modified to Phosphothreonine. Position 106 is a phosphoserine (Ser106). The helical transmembrane segment at 122–138 threads the bilayer; it reads CLLLLVAIVGFQVLNAI. 194 to 201 contributes to the ATP binding site; that stretch reads GPSGVGKS.

Belongs to the ClpA/ClpB family. Torsin subfamily.

It is found in the membrane. The polypeptide is Torsin-4A (TOR4A) (Homo sapiens (Human)).